A 373-amino-acid chain; its full sequence is Probable G-protein coupled receptor 173 (373 aa).

Residues 1-26 (MANTTGEPEEVSGALSPPSAVAYVKL) are Extracellular-facing. An N-linked (GlcNAc...) asparagine glycan is attached at Asn3. The helical transmembrane segment at 27–47 (VLLGLIMCVSLAGNAILSLLV) threads the bilayer. The Cytoplasmic portion of the chain corresponds to 48-59 (LKDRALHKAPYY). The helical transmembrane segment at 60–80 (FLLDLCLADGIRSAVCFPFVL) threads the bilayer. The Extracellular segment spans residues 81-97 (ASVRHGSSWTFSALSCK). A disulfide bridge links Cys96 with Cys174. The helical transmembrane segment at 98–118 (IVAFMAVLFCFHAAFMLFCIS) threads the bilayer. Over 119-139 (VTRYMAIAHHRFYAKRMTLWT) the chain is Cytoplasmic. Residues 140 to 160 (CAAVICMAWTLSVAMAFPPVF) form a helical membrane-spanning segment. Topologically, residues 161–188 (DVGTYKFIREEDQCIFEHRYFKANDTLG) are extracellular. Asn184 carries an N-linked (GlcNAc...) asparagine glycan. Residues 189–209 (FMLMLAVLMAATHAVYGKLLL) traverse the membrane as a helical segment. Topologically, residues 210–287 (FEYRHRKMKP…VKGEKQLGRM (78 aa)) are cytoplasmic. The chain crosses the membrane as a helical span at residues 288–308 (FYAITLLFLLLWSPYIVACYW). Over 309 to 322 (RVFVKACAVPHRYL) the chain is Extracellular. The helical transmembrane segment at 323 to 343 (ATAVWMSFAQAAVNPIVCFLL) threads the bilayer. Residues 344 to 373 (NKDLKKCLRTHAPCWGTGGAPAPREPYCVM) are Cytoplasmic-facing.

Belongs to the G-protein coupled receptor 1 family.

The protein resides in the cell membrane. Is a receptor for the SMIM20 derived peptides Phoenixin-14 and Phoenixin-20. It mediates the Phoenixin-14 and Phoenixin-20 augmentation of gonadotropin-releasing hormone (GNRH) signaling in the hypothalamus and pituitary gland. In the ovary, it mediates the effects of Phoenixin-14 and Phoenixin-20 induced granulosa cell proliferation during follicular growth. The sequence is that of Probable G-protein coupled receptor 173 (GPR173) from Bos taurus (Bovine).